A 496-amino-acid chain; its full sequence is Xylulose kinase (496 aa).

83 to 84 (MH) lines the substrate pocket. The active-site Proton acceptor is the D237.

It belongs to the FGGY kinase family.

It catalyses the reaction D-xylulose + ATP = D-xylulose 5-phosphate + ADP + H(+). In terms of biological role, catalyzes the phosphorylation of D-xylulose to D-xylulose 5-phosphate. This chain is Xylulose kinase, found in Staphylococcus epidermidis (strain ATCC 12228 / FDA PCI 1200).